Here is a 985-residue protein sequence, read N- to C-terminus: Phosphoenolpyruvate carboxylase (985 aa).

Residues 1–17 (MTQSAARRASSRATPAR) are compositionally biased toward low complexity. A disordered region spans residues 1–55 (MTQSAARRASSRATPARKTPPAPASQTPAPSPGGTAGTALGPTSRRSSGSAAAKD). Active-site residues include histidine 193 and lysine 634.

This sequence belongs to the PEPCase type 1 family. It depends on Mg(2+) as a cofactor.

The enzyme catalyses oxaloacetate + phosphate = phosphoenolpyruvate + hydrogencarbonate. Functionally, forms oxaloacetate, a four-carbon dicarboxylic acid source for the tricarboxylic acid cycle. This is Phosphoenolpyruvate carboxylase from Ralstonia nicotianae (strain ATCC BAA-1114 / GMI1000) (Ralstonia solanacearum).